The following is a 417-amino-acid chain: Histidinol-phosphate aminotransferase 1, chloroplastic (417 aa).

The N-terminal 40 residues, 1–40 (MGVINVQGSPSFSIHSSESNLRKSRALKKPFCSIRNRVYC), are a transit peptide targeting the chloroplast. A41 is modified (N-acetylalanine). K277 is modified (N6-(pyridoxal phosphate)lysine).

Belongs to the class-II pyridoxal-phosphate-dependent aminotransferase family. Histidinol-phosphate aminotransferase subfamily. Homodimer. Requires pyridoxal 5'-phosphate as cofactor. In terms of tissue distribution, expressed in both vegetative and reproductive tissues.

Its subcellular location is the plastid. The protein resides in the chloroplast. The catalysed reaction is L-histidinol phosphate + 2-oxoglutarate = 3-(imidazol-4-yl)-2-oxopropyl phosphate + L-glutamate. Its pathway is amino-acid biosynthesis; L-histidine biosynthesis; L-histidine from 5-phospho-alpha-D-ribose 1-diphosphate: step 7/9. This is Histidinol-phosphate aminotransferase 1, chloroplastic (HISN6A) from Arabidopsis thaliana (Mouse-ear cress).